The following is a 292-amino-acid chain: tRNA-cytidine(32) 2-sulfurtransferase (292 aa).

The PP-loop motif motif lies at 54 to 59 (SGGKDS). [4Fe-4S] cluster contacts are provided by Cys129, Cys132, and Cys220.

Belongs to the TtcA family. In terms of assembly, homodimer. Mg(2+) is required as a cofactor. The cofactor is [4Fe-4S] cluster.

The protein localises to the cytoplasm. It carries out the reaction cytidine(32) in tRNA + S-sulfanyl-L-cysteinyl-[cysteine desulfurase] + AH2 + ATP = 2-thiocytidine(32) in tRNA + L-cysteinyl-[cysteine desulfurase] + A + AMP + diphosphate + H(+). It functions in the pathway tRNA modification. Its function is as follows. Catalyzes the ATP-dependent 2-thiolation of cytidine in position 32 of tRNA, to form 2-thiocytidine (s(2)C32). The sulfur atoms are provided by the cysteine/cysteine desulfurase (IscS) system. The chain is tRNA-cytidine(32) 2-sulfurtransferase from Cereibacter sphaeroides (strain ATCC 17025 / ATH 2.4.3) (Rhodobacter sphaeroides).